Reading from the N-terminus, the 311-residue chain is MATYLDFEQKIKIIQEDIISAQVRHDDGLVASLKKNLDKEVSKIFTNLSPFQQLQLARHVDRPYALDYINLLMRDKYEIHGDRHFRDDAAILCYIGYIGEEKVVVIGEQKGRGTKNKIKRNFGMPHPEGYRKALRAAKLAEKFNLPLLMLVDTPGAYPGIGAEERNQSEAIARNLLELSQLNTQSISVVIGEGGSGGALAIGVADRFAMMRYSVFSVISPEGCSAILWNDPAKVESATNAMKITSGDLKELNLIDDIIAEPLIGAHRDRDSAAAAIGEYFLSELKKLRQMSNEQRMEERYKKLTSVGAFSE.

One can recognise a CoA carboxyltransferase C-terminal domain in the interval 36–286; sequence NLDKEVSKIF…GEYFLSELKK (251 aa).

It belongs to the AccA family. In terms of assembly, acetyl-CoA carboxylase is a heterohexamer composed of biotin carboxyl carrier protein (AccB), biotin carboxylase (AccC) and two subunits each of ACCase subunit alpha (AccA) and ACCase subunit beta (AccD).

It is found in the cytoplasm. It catalyses the reaction N(6)-carboxybiotinyl-L-lysyl-[protein] + acetyl-CoA = N(6)-biotinyl-L-lysyl-[protein] + malonyl-CoA. Its pathway is lipid metabolism; malonyl-CoA biosynthesis; malonyl-CoA from acetyl-CoA: step 1/1. In terms of biological role, component of the acetyl coenzyme A carboxylase (ACC) complex. First, biotin carboxylase catalyzes the carboxylation of biotin on its carrier protein (BCCP) and then the CO(2) group is transferred by the carboxyltransferase to acetyl-CoA to form malonyl-CoA. This Sulfurimonas denitrificans (strain ATCC 33889 / DSM 1251) (Thiomicrospira denitrificans (strain ATCC 33889 / DSM 1251)) protein is Acetyl-coenzyme A carboxylase carboxyl transferase subunit alpha.